Here is a 68-residue protein sequence, read N- to C-terminus: Alpha-conotoxin-like Lt1.2 (68 aa).

The N-terminal stretch at 1 to 21 is a signal peptide; the sequence is MGMRMMFIMFMLVVLATTVDT. Residues 22–48 constitute a propeptide that is removed on maturation; it reads FTSDRALDAMNAAASNKASRLIALAVR. Disulfide bonds link C50–C56 and C51–C64. Positions 52–54 are lacks the Ser-Xaa-Pro motif that is crucial for potent interaction with nAChR; the sequence is ARA. G65 bears the Glycine amide mark.

This sequence belongs to the conotoxin A superfamily. In terms of tissue distribution, expressed by the venom duct.

It localises to the secreted. Alpha-conotoxins act on postsynaptic membranes, they bind to the nicotinic acetylcholine receptors (nAChR) and thus inhibit them. Has a distinct nAChR binding mode from other alpha-conotoxins, due to a different three residue motif (Ala-Xaa-Ala instead of the conserved Ser-Xaa-Pro motif). The protein is Alpha-conotoxin-like Lt1.2 of Conus litteratus (Lettered cone).